Consider the following 557-residue polypeptide: CDP-diacylglycerol--glycerol-3-phosphate 3-phosphatidyltransferase, mitochondrial (557 aa).

The transit peptide at 1–25 directs the protein to the mitochondrion; it reads MAAAGGAALWRRLAAWLPRGPPGLA. Residue 121-128 participates in ATP binding; that stretch reads ASLYLGTG. Residues 212–238 form the PLD phosphodiesterase 1 domain; the sequence is TIGLQHIKVYLFDDNVILSGANLSDLY. Residues His217, Lys219, and Asp224 contribute to the active site. The interval 322–346 is disordered; sequence TFHSSQQGSSMLPQHDSEASEGLKP. Polar residues predominate over residues 323–333; sequence FHSSQQGSSML. Residues 336-346 are compositionally biased toward basic and acidic residues; sequence HDSEASEGLKP. One can recognise a PLD phosphodiesterase 2 domain in the interval 461-494; that stretch reads AGWTFHAKGLWLYLAGSSLPCLTLIGSPNFGYRS.

Belongs to the CDP-alcohol phosphatidyltransferase class-II family.

It is found in the mitochondrion. The catalysed reaction is a CDP-1,2-diacyl-sn-glycerol + sn-glycerol 3-phosphate = a 1,2-diacyl-sn-glycero-3-phospho-(1'-sn-glycero-3'-phosphate) + CMP + H(+). The protein operates within phospholipid metabolism; phosphatidylglycerol biosynthesis; phosphatidylglycerol from CDP-diacylglycerol: step 1/2. Its activity is regulated as follows. Activated by calcium and magnesium and inhibited by other bivalent cations. Functions in the biosynthesis of the anionic phospholipids phosphatidylglycerol and cardiolipin. This is CDP-diacylglycerol--glycerol-3-phosphate 3-phosphatidyltransferase, mitochondrial (PGS1) from Gallus gallus (Chicken).